The chain runs to 802 residues: Ribosomal protein S6 kinase alpha-5 (802 aa).

Residues 1 to 22 (MEEEGGSSGGAAGTSADGGDGG) are compositionally biased toward gly residues. Residues 1-23 (MEEEGGSSGGAAGTSADGGDGGE) form a disordered region. The 270-residue stretch at 49 to 318 (FELLKVLGTG…ADEIKEHLFF (270 aa)) folds into the Protein kinase 1 domain. Residues 55–63 (LGTGAYGKV) and Lys81 each bind ATP. Residue Asp177 is the Proton acceptor of the active site. Ser212 is subject to Phosphoserine; by autocatalysis. In terms of domain architecture, AGC-kinase C-terminal spans 319-387 (QKINWDDLAA…VAPSILFKRN (69 aa)). Ser360 carries the post-translational modification Phosphoserine; by MAPK1, MAPK3 and MAPK14. Ser376 and Ser381 each carry phosphoserine; by autocatalysis. The Protein kinase 2 domain occupies 426 to 687 (DLKDKPLGEG…MSGLRYNEWL (262 aa)). ATP-binding positions include 432-440 (LGEGSFSIC) and Lys455. Residue Asp544 is the Proton acceptor of the active site. A Phosphothreonine; by MAPK1, MAPK3 and MAPK14 modification is found at Thr581. Residues Ser647, Ser657, Ser691, and Ser695 each carry the phosphoserine modification. A Phosphothreonine; by MAPK1, MAPK3 and MAPK14 modification is found at Thr700. A disordered region spans residues 741–802 (AKRRKMKKTS…TLFQFSDSVA (62 aa)). A compositionally biased stretch (low complexity) spans 749–779 (TSTSTETRSSSSESSHSSSSHSHGKTTPTKT). A phosphoserine; by autocatalysis mark is found at Ser750, Ser752, and Ser758. Residues 780 to 802 (LQPSNPADSNNPETLFQFSDSVA) show a composition bias toward polar residues. Ser798 is modified (phosphoserine).

The protein belongs to the protein kinase superfamily. AGC Ser/Thr protein kinase family. S6 kinase subfamily. In terms of assembly, forms a complex with either MAPK1/ERK2 or MAPK3/ERK1 in quiescent cells which transiently dissociates following mitogenic stimulation. Also associates with MAPK14/p38-alpha. Activated RPS6KA5 associates with and phosphorylates the NF-kappa-B p65 subunit RELA. Interacts with CREBBP and EP300. It depends on Mg(2+) as a cofactor. In terms of processing, ser-376 and Thr-581 phosphorylation is required for kinase activity. Ser-376 and Ser-212 are autophosphorylated by the C-terminal kinase domain, and their phosphorylation is essential for the catalytic activity of the N-terminal kinase domain. Phosphorylated at Ser-360, Thr-581 and Thr-700 by MAPK1/ERK2, MAPK3/ERK1 and MAPK14/p38-alpha. Autophosphorylated at Ser-750, Ser-752 and Ser-758 by the N-terminal kinase domain. Post-translationally, ubiquitinated.

The protein resides in the nucleus. It catalyses the reaction L-seryl-[protein] + ATP = O-phospho-L-seryl-[protein] + ADP + H(+). The catalysed reaction is L-threonyl-[protein] + ATP = O-phospho-L-threonyl-[protein] + ADP + H(+). Its activity is regulated as follows. Activated by phosphorylation at Ser-360, Thr-581 and Thr-700 by MAPK1/ERK2, MAPK3/ERK1 and MAPK14/p38-alpha, and by further autophosphorylation of Ser-212, Ser-376 and Ser-381 by the activated C-terminal kinase domain. The active N-terminal kinase domain finally phosphorylates downstream substrates, as well as Ser-750, Ser-752 and Ser-758 in its own C-terminal region. In terms of biological role, serine/threonine-protein kinase that is required for the mitogen or stress-induced phosphorylation of the transcription factors CREB1 and ATF1 and for the regulation of the transcription factors RELA, STAT3 and ETV1/ER81, and that contributes to gene activation by histone phosphorylation and functions in the regulation of inflammatory genes. Phosphorylates CREB1 and ATF1 in response to mitogenic or stress stimuli such as UV-C irradiation, epidermal growth factor (EGF) and anisomycin. Plays an essential role in the control of RELA transcriptional activity in response to TNF and upon glucocorticoid, associates in the cytoplasm with the glucocorticoid receptor NR3C1 and contributes to RELA inhibition and repression of inflammatory gene expression. In skeletal myoblasts is required for phosphorylation of RELA at 'Ser-276' during oxidative stress. In erythropoietin-stimulated cells, is necessary for the 'Ser-727' phosphorylation of STAT3 and regulation of its transcriptional potential. Phosphorylates ETV1/ER81 at 'Ser-191' and 'Ser-216', and thereby regulates its ability to stimulate transcription, which may be important during development and breast tumor formation. Directly represses transcription via phosphorylation of 'Ser-1' of histone H2A. Phosphorylates 'Ser-10' of histone H3 in response to mitogenics, stress stimuli and EGF, which results in the transcriptional activation of several immediate early genes, including proto-oncogenes c-fos/FOS and c-jun/JUN. May also phosphorylate 'Ser-28' of histone H3. Mediates the mitogen- and stress-induced phosphorylation of high mobility group protein 1 (HMGN1/HMG14). In lipopolysaccharide-stimulated primary macrophages, acts downstream of the Toll-like receptor TLR4 to limit the production of pro-inflammatory cytokines. Functions probably by inducing transcription of the MAP kinase phosphatase DUSP1 and the anti-inflammatory cytokine interleukin 10 (IL10), via CREB1 and ATF1 transcription factors. Plays a role in neuronal cell death by mediating the downstream effects of excitotoxic injury. Phosphorylates TRIM7 at 'Ser-107' in response to growth factor signaling via the MEK/ERK pathway, thereby stimulating its ubiquitin ligase activity. This chain is Ribosomal protein S6 kinase alpha-5 (RPS6KA5), found in Pongo abelii (Sumatran orangutan).